The following is a 274-amino-acid chain: Large ribosomal subunit protein uL2 (274 aa).

The segment at 222-274 is disordered; sequence GVAMNPVDHPHGGGEGRGKGHHPQSPWGQLAKGYKTRRGKKASDKLIVRRRNG. Over residues 229–239 the composition is skewed to basic and acidic residues; it reads DHPHGGGEGRG.

It belongs to the universal ribosomal protein uL2 family. Part of the 50S ribosomal subunit. Forms a bridge to the 30S subunit in the 70S ribosome.

Functionally, one of the primary rRNA binding proteins. Required for association of the 30S and 50S subunits to form the 70S ribosome, for tRNA binding and peptide bond formation. It has been suggested to have peptidyltransferase activity; this is somewhat controversial. Makes several contacts with the 16S rRNA in the 70S ribosome. This chain is Large ribosomal subunit protein uL2, found in Thermosipho africanus (strain TCF52B).